We begin with the raw amino-acid sequence, 90 residues long: Small ribosomal subunit protein bS20 (90 aa).

It belongs to the bacterial ribosomal protein bS20 family.

In terms of biological role, binds directly to 16S ribosomal RNA. The sequence is that of Small ribosomal subunit protein bS20 from Rickettsia akari (strain Hartford).